Here is a 176-residue protein sequence, read N- to C-terminus: Cell division control protein 31 (176 aa).

Residues 1 to 12 are compositionally biased toward basic residues; it reads MFANARAKRRSR. Positions 1 to 21 are disordered; that stretch reads MFANARAKRRSRASSPTPARL. EF-hand domains follow at residues 34-69, 70-105, 107-142, and 143-176; these read EQRQ…LGFN, AEKS…KIVE, DPLE…LNEN, and IDDQ…MDEA. Ca(2+) contacts are provided by aspartate 47, aspartate 49, aspartate 51, and glutamate 58. Ca(2+)-binding residues include aspartate 156, aspartate 158, aspartate 160, glutamate 162, and glutamate 167.

This sequence belongs to the centrin family. Component of the spindle pole body (SPB), acting as the connector of microtubule arrays in the cytoplasm and the nucleoplasm, is involved in nuclear positioning before chromosome segregation, SPB separation, spindle formation, chromosome segregation, nuclear migration into the bud, nuclear reorientation after cytokinesis and nuclear fusion during conjugation. The SPB half-bridge, which is tightly associated with the cytoplasmic side of the nuclear envelope and the SPB, is playing a key role as the starting structure for and in the initiation of SPB duplication in G1. Within the complex, interacts with sad1.

The protein resides in the nucleus. In terms of biological role, required for the proper coordination between exit from mitosis and the initiation of septation. Has a role in bipolar spindle formation during spindle pole body (SPB) duplication. Required for the localization of sad1 to the SPB. The polypeptide is Cell division control protein 31 (cdc31) (Schizosaccharomyces pombe (strain 972 / ATCC 24843) (Fission yeast)).